Reading from the N-terminus, the 162-residue chain is Protein NrdI (162 aa).

It belongs to the NrdI family.

In terms of biological role, probably involved in ribonucleotide reductase function. The sequence is that of Protein NrdI from Streptococcus pyogenes serotype M28 (strain MGAS6180).